Consider the following 200-residue polypeptide: Holliday junction resolvase RecU (200 aa).

The disordered stretch occupies residues 1–27; it reads MALKYPSGKEYRGNKPNAARRPAADYA. Positions 84, 86, 99, and 118 each coordinate Mg(2+).

Belongs to the RecU family. In terms of assembly, homodimer. Requires Mg(2+) as cofactor.

The protein resides in the cytoplasm. It carries out the reaction Endonucleolytic cleavage at a junction such as a reciprocal single-stranded crossover between two homologous DNA duplexes (Holliday junction).. Its function is as follows. Endonuclease that resolves Holliday junction intermediates in genetic recombination. Cleaves mobile four-strand junctions by introducing symmetrical nicks in paired strands. Promotes annealing of linear ssDNA with homologous dsDNA. Required for DNA repair, homologous recombination and chromosome segregation. The polypeptide is Holliday junction resolvase RecU (Geobacillus kaustophilus (strain HTA426)).